A 197-amino-acid polypeptide reads, in one-letter code: Nucleoside triphosphate pyrophosphatase (197 aa).

Catalysis depends on Asp70, which acts as the Proton acceptor.

It belongs to the Maf family. Requires a divalent metal cation as cofactor.

It is found in the cytoplasm. It catalyses the reaction a ribonucleoside 5'-triphosphate + H2O = a ribonucleoside 5'-phosphate + diphosphate + H(+). It carries out the reaction a 2'-deoxyribonucleoside 5'-triphosphate + H2O = a 2'-deoxyribonucleoside 5'-phosphate + diphosphate + H(+). In terms of biological role, nucleoside triphosphate pyrophosphatase. May have a dual role in cell division arrest and in preventing the incorporation of modified nucleotides into cellular nucleic acids. This is Nucleoside triphosphate pyrophosphatase (yhdE) from Shigella flexneri.